A 212-amino-acid polypeptide reads, in one-letter code: Pyrrolidone-carboxylate peptidase (212 aa).

Residues Glu80, Cys143, and His165 contribute to the active site.

Belongs to the peptidase C15 family. In terms of assembly, homotetramer.

The protein localises to the cytoplasm. It catalyses the reaction Release of an N-terminal pyroglutamyl group from a polypeptide, the second amino acid generally not being Pro.. In terms of biological role, removes 5-oxoproline from various penultimate amino acid residues except L-proline. This Vibrio vulnificus (strain CMCP6) protein is Pyrrolidone-carboxylate peptidase.